The primary structure comprises 394 residues: Thioredoxin-interacting protein (394 aa).

A Glycyl lysine isopeptide (Lys-Gly) (interchain with G-Cter in ubiquitin) cross-link involves residue Lys212. Phosphoserine is present on Ser361.

The protein belongs to the arrestin family. As to quaternary structure, homodimer; disulfide-linked. Interacts with TXN/thioredoxin through its redox-active site. Interacts with transcriptional repressors ZBTB16, ZBTB32 and HDAC1. Interacts with DDIT4. Ubiquitinated; undergoes heterotypic 'Lys-48'-/'Lys-63'-branched polyubiquitination catalyzed by ITCH and UBR5 resulting in proteasomal degradation. Deubiquitinated by USP5, leading to TXNIP stabilization.

It is found in the cytoplasm. In terms of biological role, may act as an oxidative stress mediator by inhibiting thioredoxin activity or by limiting its bioavailability. Interacts with COPS5 and restores COPS5-induced suppression of CDKN1B stability, blocking the COPS5-mediated translocation of CDKN1B from the nucleus to the cytoplasm. Functions as a transcriptional repressor, possibly by acting as a bridge molecule between transcription factors and corepressor complexes, and over-expression will induce G0/G1 cell cycle arrest. Required for the maturation of natural killer cells. Acts as a suppressor of tumor cell growth. Inhibits the proteasomal degradation of DDIT4, and thereby contributes to the inhibition of the mammalian target of rapamycin complex 1 (mTORC1). This is Thioredoxin-interacting protein (Txnip) from Rattus norvegicus (Rat).